The sequence spans 423 residues: COP9 signalosome complex subunit 3 (423 aa).

The PCI domain occupies 197 to 365 (NFERALYFYE…GMVCFHDNPE (169 aa)). Residues 402-423 (QFVQKSMGSQEDDSGTKPSSYS) form a disordered region.

The protein belongs to the CSN3 family. As to quaternary structure, component of the CSN complex, probably composed of COPS1, COPS2, COPS3, COPS4, COPS5, COPS6, COPS7, COPS8 and COPS9.

The protein localises to the cytoplasm. The protein resides in the nucleus. In terms of biological role, component of the COP9 signalosome complex (CSN), a complex involved in various cellular and developmental processes. The CSN complex is an essential regulator of the ubiquitin (Ubl) conjugation pathway by mediating the deneddylation of the cullin subunits of E3 ligase complexes, leading to modify the Ubl ligase activity. This chain is COP9 signalosome complex subunit 3 (COPS3), found in Gallus gallus (Chicken).